A 231-amino-acid chain; its full sequence is PIAGSMVLAAILLKLGGYGIIRMMQILPTTKTDVFLPFIVLALWGAILANLTCLQQTDLKSLIAYSSVSHMGLVVAAIIIQTPWGLSGAMALMIAHGFTSSALFCLANTTYERTHTRVLILTRGFHNILPMATTWWLLINLMNIATPPTINFTSELLIISALFNWCPTTMIMLGLSMLITASYSLHMFLSTQMGPTMLSSQTEPTHSREHLLMILHIIPLVLISMKPELVI.

The next 7 helical transmembrane spans lie at 1–21 (PIAG…YGII), 34–54 (VFLP…LTCL), 61–80 (SLIA…AIII), 84–106 (WGLS…LFCL), 128–148 (ILPM…ATPP), 156–176 (LLII…LGLS), and 211–231 (LLMI…ELVI).

Belongs to the complex I subunit 4 family.

It is found in the mitochondrion membrane. The enzyme catalyses a ubiquinone + NADH + 5 H(+)(in) = a ubiquinol + NAD(+) + 4 H(+)(out). Its function is as follows. Core subunit of the mitochondrial membrane respiratory chain NADH dehydrogenase (Complex I) that is believed to belong to the minimal assembly required for catalysis. Complex I functions in the transfer of electrons from NADH to the respiratory chain. The immediate electron acceptor for the enzyme is believed to be ubiquinone. This Tropidolaemus wagleri (Wagler's pit viper) protein is NADH-ubiquinone oxidoreductase chain 4 (MT-ND4).